A 118-amino-acid chain; its full sequence is UPF0102 protein NE0719 (118 aa).

This sequence belongs to the UPF0102 family.

This chain is UPF0102 protein NE0719, found in Nitrosomonas europaea (strain ATCC 19718 / CIP 103999 / KCTC 2705 / NBRC 14298).